The chain runs to 484 residues: MGLMDVDQTQLLSKMVIGDGHGEASPYFDGWKAYDENPFHPKENPNGVIQMGLAENQLTSDLVEDWILNNPEASICTPEGINDFRAIANFQDYHGLPEFRNAVAKFMGRTRGNRVTFDPDRIVMSGGATGAHEVTTFCLADPGDAFLVPIPYYPGFDRDLRWRTGIKLVPVMCDSSNNFKLTKQALEDAYEKAKEDNIRVKGLLITNPSNPLGTVMDRNTLRTVMSFINEKRIHLVSDEIYSATVFSHPSFISIAEILEEDTDIECDRNLVHIVYSLSKDMGFPGFRVGIIYSYNDAVVHCARKMSSFGLVSTQTQYLLASMLNDDEFVESFLVESAKRLAQRHRVFTGGLAKVGIKCLQSNAGLFVWMDLRQLLKKPTLDSEMELWRVIIDEVKINVSPGSSFHCTEPGWFRVCYANMDDMAVQIALQRIRNFVLQNKEIMVPNKKHCWHSNLRLSLKTRRFDDIMMSPHSPIPQSPLVKATI.

At Lys-279 the chain carries N6-(pyridoxal phosphate)lysine.

This sequence belongs to the class-I pyridoxal-phosphate-dependent aminotransferase family. As to quaternary structure, homodimer. Pyridoxal 5'-phosphate serves as cofactor.

It catalyses the reaction S-adenosyl-L-methionine = 1-aminocyclopropane-1-carboxylate + S-methyl-5'-thioadenosine + H(+). It participates in alkene biosynthesis; ethylene biosynthesis via S-adenosyl-L-methionine; ethylene from S-adenosyl-L-methionine: step 1/2. Catalyzes the formation of 1-aminocyclopropane-1-carboxylate, a direct precursor of ethylene in higher plants. The protein is 1-aminocyclopropane-1-carboxylate synthase (ACS1) of Glycine max (Soybean).